Here is a 168-residue protein sequence, read N- to C-terminus: Cysteine-rich perinuclear theca protein 1 (168 aa).

The interval 144 to 168 (NVSDPEEVPPCLDSDPFPNGDLASS) is disordered.

In terms of tissue distribution, specifically expressed in spermatozoa (at protein level). Detected from the elongated spermatid stage onwards; not found in immature germ cells or somatic cells (at protein level).

It localises to the cytoplasm. It is found in the cytoskeleton. The protein localises to the perinuclear theca. The chain is Cysteine-rich perinuclear theca protein 1 from Mus musculus (Mouse).